The chain runs to 161 residues: Large-conductance mechanosensitive channel (161 aa).

Helical transmembrane passes span 21-41 (VGVI…DGVI) and 79-99 (GAFI…FLLV). Residues 142–154 (TAAPKAAAAPVAK) are compositionally biased toward low complexity. The tract at residues 142 to 161 (TAAPKAAAAPVAKPKTKPKA) is disordered.

The protein belongs to the MscL family. Homopentamer.

The protein resides in the cell inner membrane. Its function is as follows. Channel that opens in response to stretch forces in the membrane lipid bilayer. May participate in the regulation of osmotic pressure changes within the cell. This is Large-conductance mechanosensitive channel from Caulobacter sp. (strain K31).